We begin with the raw amino-acid sequence, 510 residues long: Adenosine deaminase 2 (510 aa).

An N-terminal signal peptide occupies residues 1–24 (MSGWPVLPALLLAVAMSSFHSATS). The segment at 25–95 (RDEERNRLLM…GLMEKSAVFN (71 aa)) is dimerization. Residues His107 and His109 each coordinate Zn(2+). Substrate is bound at residue Asp110. The N-linked (GlcNAc...) asparagine glycan is linked to Asn122. The segment at 122–182 (NATYRPYCYF…TEFDNSLLRT (61 aa)) is PRB domain. A disulfide bridge connects residues Cys132 and Cys156. N-linked (GlcNAc...) asparagine glycosylation occurs at Asn171. Substrate contacts are provided by residues 201–208 (WKKFKTIF), His290, and Gly323. His353 is a Zn(2+) binding site. Residue Glu356 is the Proton donor of the active site. Asn375 carries N-linked (GlcNAc...) asparagine glycosylation. His381 (proton acceptor) is an active-site residue. Residue Asp438 participates in Zn(2+) binding. Position 439 (Asp439) interacts with substrate.

The protein belongs to the metallo-dependent hydrolases superfamily. Adenosine and AMP deaminases family. ADGF subfamily. In terms of assembly, homodimer. Interacts with adenosine receptors. Binds heparin. Requires Zn(2+) as cofactor.

It is found in the secreted. The enzyme catalyses adenosine + H2O + H(+) = inosine + NH4(+). Its function is as follows. Adenosine deaminase that may contribute to the degradation of extracellular adenosine, a signaling molecule that controls a variety of cellular responses. Requires elevated adenosine levels for optimal enzyme activity. Binds to cell surfaces via proteoglycans and may play a role in the regulation of cell proliferation and differentiation, independently of its enzyme activity. This Sus scrofa (Pig) protein is Adenosine deaminase 2.